Reading from the N-terminus, the 391-residue chain is Serine acetyltransferase 3, mitochondrial (391 aa).

Disordered stretches follow at residues 40–82 (KHHT…HDDE) and 353–375 (VGNPARLLGGKDNPKTHDKIPGL). Residues 45-56 (SPPPSPPPPPPM) are compositionally biased toward pro residues.

Belongs to the transferase hexapeptide repeat family. In terms of assembly, homomultimer. Interacts with OASC. Component of the cysteine synthase complex (CSC) composed of two OAS-TL dimers and one SAT hexamer. Ubiquitous with higher levels in leaves and siliques. Localized in vascular tissues, particularly in phloem.

The protein resides in the mitochondrion. The enzyme catalyses L-serine + acetyl-CoA = O-acetyl-L-serine + CoA. Its pathway is amino-acid biosynthesis; L-cysteine biosynthesis; L-cysteine from L-serine: step 1/2. This is Serine acetyltransferase 3, mitochondrial (SAT3) from Arabidopsis thaliana (Mouse-ear cress).